A 272-amino-acid chain; its full sequence is MANYTAADVKKLREMTGSGMMDCKKALVEAEGDFDKAIEILRIQGAKDVGKRAERSASEGLIAVSGNTMIEVNAETDFVAKNQEFIDFANKVAQAADAANANSREELEAVEVDGVKAVDALQELSAKIGEKLELKRAVTLEGDKVAVYLHQRSADLPPAVGVLVAYEGENEEAARAAAMQVAALKASFLSTDDIPAETVAKEREIAEATAREEGKPEKALPNIIEGRLKGYFKDVVLLEQPSVTESKKTVKQVMDEAGVKLTGFVRYELGQA.

The interval 76–79 is involved in Mg(2+) ion dislocation from EF-Tu; it reads TDFV.

This sequence belongs to the EF-Ts family.

The protein localises to the cytoplasm. Associates with the EF-Tu.GDP complex and induces the exchange of GDP to GTP. It remains bound to the aminoacyl-tRNA.EF-Tu.GTP complex up to the GTP hydrolysis stage on the ribosome. This Corynebacterium urealyticum (strain ATCC 43042 / DSM 7109) protein is Elongation factor Ts.